The chain runs to 527 residues: Probable glucomannan 4-beta-mannosyltransferase 9 (527 aa).

A helical transmembrane segment spans residues 37-59 (AMSVMLFVEKVYMSVVLVGVHLF). D131 is an active-site residue. Positions 190 and 192 each coordinate substrate. The active site involves D284. 4 helical membrane-spanning segments follow: residues 363–383 (IIGHIVTFVFYCLVVPATVLI), 399–419 (IVTILNSIGTPRSLHLLIFWV), 478–498 (ALELGFSAYLSFCGCYDIAYG), and 505–525 (FLFLQSITFFIIGVGYVGTIV).

Belongs to the glycosyltransferase 2 family. Plant cellulose synthase-like A subfamily.

The protein resides in the golgi apparatus membrane. It catalyses the reaction GDP-mannose + (glucomannan)n = GDP + (glucomannan)n+1.. In terms of biological role, probable mannan synthase which consists of a 4-beta-mannosyltransferase activity on mannan using GDP-mannose. The beta-1,4-mannan product is the backbone for galactomannan synthesis by galactomannan galactosyltransferase. Galactomannan is a noncellulosic polysaccharides of plant cell wall. The chain is Probable glucomannan 4-beta-mannosyltransferase 9 from Oryza sativa subsp. japonica (Rice).